Reading from the N-terminus, the 311-residue chain is Large ribosomal subunit protein uL18 (311 aa).

This sequence belongs to the universal ribosomal protein uL18 family. As to quaternary structure, component of the large ribosomal subunit (LSU).

The protein resides in the cytoplasm. It is found in the nucleus. In terms of biological role, component of the ribosome, a large ribonucleoprotein complex responsible for the synthesis of proteins in the cell. The small ribosomal subunit (SSU) binds messenger RNAs (mRNAs) and translates the encoded message by selecting cognate aminoacyl-transfer RNA (tRNA) molecules. The large subunit (LSU) contains the ribosomal catalytic site termed the peptidyl transferase center (PTC), which catalyzes the formation of peptide bonds, thereby polymerizing the amino acids delivered by tRNAs into a polypeptide chain. The nascent polypeptides leave the ribosome through a tunnel in the LSU and interact with protein factors that function in enzymatic processing, targeting, and the membrane insertion of nascent chains at the exit of the ribosomal tunnel. The protein is Large ribosomal subunit protein uL18 (RPL5) of Eimeria tenella (Coccidian parasite).